Reading from the N-terminus, the 308-residue chain is Thymidylate synthase (308 aa).

Residues arginine 26 and arginine 170–arginine 171 contribute to the dUMP site. The Nucleophile role is filled by cysteine 190. DUMP-binding positions include arginine 210 to aspartate 213, asparagine 221, and histidine 251 to tyrosine 253. Aspartate 213 serves as a coordination point for (6R)-5,10-methylene-5,6,7,8-tetrahydrofolate. (6R)-5,10-methylene-5,6,7,8-tetrahydrofolate is bound at residue alanine 307.

This sequence belongs to the thymidylate synthase family. Bacterial-type ThyA subfamily. As to quaternary structure, homodimer.

Its subcellular location is the cytoplasm. The enzyme catalyses dUMP + (6R)-5,10-methylene-5,6,7,8-tetrahydrofolate = 7,8-dihydrofolate + dTMP. It participates in pyrimidine metabolism; dTTP biosynthesis. Its function is as follows. Catalyzes the reductive methylation of 2'-deoxyuridine-5'-monophosphate (dUMP) to 2'-deoxythymidine-5'-monophosphate (dTMP) while utilizing 5,10-methylenetetrahydrofolate (mTHF) as the methyl donor and reductant in the reaction, yielding dihydrofolate (DHF) as a by-product. This enzymatic reaction provides an intracellular de novo source of dTMP, an essential precursor for DNA biosynthesis. The chain is Thymidylate synthase from Rhizorhabdus wittichii (strain DSM 6014 / CCUG 31198 / JCM 15750 / NBRC 105917 / EY 4224 / RW1) (Sphingomonas wittichii).